Here is a 414-residue protein sequence, read N- to C-terminus: Argininosuccinate synthase (414 aa).

ATP is bound at residue 12 to 20 (AYSGGLDTS). L-citrulline contacts are provided by Y90 and S95. G120 is an ATP binding site. The L-aspartate site is built by T122, N126, and D127. N126 is a binding site for L-citrulline. Residues R130, S179, S188, E264, and Y276 each coordinate L-citrulline.

Belongs to the argininosuccinate synthase family. Type 1 subfamily. Homotetramer.

The protein localises to the cytoplasm. It catalyses the reaction L-citrulline + L-aspartate + ATP = 2-(N(omega)-L-arginino)succinate + AMP + diphosphate + H(+). Its pathway is amino-acid biosynthesis; L-arginine biosynthesis; L-arginine from L-ornithine and carbamoyl phosphate: step 2/3. This Alkaliphilus metalliredigens (strain QYMF) protein is Argininosuccinate synthase.